We begin with the raw amino-acid sequence, 345 residues long: MRSSKVIHVVGCHAEGEVGDVIVGGVAPPPGETVWAQSRFVASDNTLRNFVLQEPRGGVFRHVNLLVPPKNKEAVAAWIIMEPEDTPPMSGSNSICVSTVLLDTGIVPMVEPETHMVLEAPGGLIEATAYCKNGKAERIRVKNHPSFADKLDAKLELEGYGTLTVDTAYGGDSFCIVDAHALGFSIKPDEAKDFADLGMKIVKAANQQLGFQHPTNKDWSHISFCQFAAPLTDDNGTPSGANAVAIRPGKIDRSPCGTGCSARMAVLHAKGILKVGDAFVGRSIIGSRFDCRVEAETSIGGRPAIVPSIMGRAFITHTAQLMVDPDDPWQTGYRLSDTWPVWKQD.

Residue serine 90 is the Proton acceptor of the active site. Residues 91 to 92 (GS), aspartate 252, and 257 to 258 (GT) each bind substrate.

This sequence belongs to the proline racemase family.

The catalysed reaction is trans-3-hydroxy-L-proline = 1-pyrroline-2-carboxylate + H2O. Catalyzes the dehydration of trans-3-hydroxy-L-proline (t3LHyp) to Delta(1)-pyrroline-2-carboxylate (Pyr2C). May be involved in a degradation pathway that converts t3LHyp to L-proline, which would allow S.novella to grow on t3LHyp as a sole carbon source. The chain is Trans-3-hydroxy-L-proline dehydratase from Ancylobacter novellus (strain ATCC 8093 / DSM 506 / JCM 20403 / CCM 1077 / IAM 12100 / NBRC 12443 / NCIMB 10456) (Starkeya novella).